The sequence spans 393 residues: Lipid-A-disaccharide synthase (393 aa).

It belongs to the LpxB family.

The enzyme catalyses a lipid X + a UDP-2-N,3-O-bis[(3R)-3-hydroxyacyl]-alpha-D-glucosamine = a lipid A disaccharide + UDP + H(+). The protein operates within bacterial outer membrane biogenesis; LPS lipid A biosynthesis. Condensation of UDP-2,3-diacylglucosamine and 2,3-diacylglucosamine-1-phosphate to form lipid A disaccharide, a precursor of lipid A, a phosphorylated glycolipid that anchors the lipopolysaccharide to the outer membrane of the cell. In Bordetella pertussis (strain Tohama I / ATCC BAA-589 / NCTC 13251), this protein is Lipid-A-disaccharide synthase.